The chain runs to 547 residues: Glucose-6-phosphate isomerase (547 aa).

Glutamate 351 (proton donor) is an active-site residue. Active-site residues include histidine 382 and lysine 510.

The protein belongs to the GPI family.

Its subcellular location is the cytoplasm. It carries out the reaction alpha-D-glucose 6-phosphate = beta-D-fructose 6-phosphate. Its pathway is carbohydrate biosynthesis; gluconeogenesis. It functions in the pathway carbohydrate degradation; glycolysis; D-glyceraldehyde 3-phosphate and glycerone phosphate from D-glucose: step 2/4. In terms of biological role, catalyzes the reversible isomerization of glucose-6-phosphate to fructose-6-phosphate. The sequence is that of Glucose-6-phosphate isomerase from Beijerinckia indica subsp. indica (strain ATCC 9039 / DSM 1715 / NCIMB 8712).